The primary structure comprises 56 residues: Secreted virulence factor CLU5a (56 aa).

Residues 1-18 form the signal peptide; it reads MKVSLTLLATLCASLASA.

This sequence belongs to the MC69 virulence factor family. As to quaternary structure, homodimer; disulfide-linked. Dimerization can possibly extend to multimerisation.

Its subcellular location is the secreted. Functionally, secreted protein required for appressorial penetration of intact host epidermal cells and for pathogenicit, but not for subsequent biotrophic and necrotrophic colonization of leaves. This chain is Secreted virulence factor CLU5a, found in Colletotrichum graminicola (strain M1.001 / M2 / FGSC 10212) (Maize anthracnose fungus).